The sequence spans 422 residues: NADH-quinone oxidoreductase subunit F (422 aa).

The tract at residues 1–26 (MLKEEDKIFTNLHGQQSHDLKSSKKR) is disordered. Positions 16–26 (QSHDLKSSKKR) are enriched in basic and acidic residues. 54–63 (GRGGAGFSTG) contacts NAD(+). 166–213 (GAGAYICGEETALLESLEGKKGMPRLKPPFPAGFGLYGCPTTINNVES) lines the FMN pocket. [4Fe-4S] cluster is bound by residues Cys344, Cys347, Cys350, and Cys390.

This sequence belongs to the complex I 51 kDa subunit family. Requires FMN as cofactor. It depends on [4Fe-4S] cluster as a cofactor.

It catalyses the reaction a quinone + NADH + 5 H(+)(in) = a quinol + NAD(+) + 4 H(+)(out). Its function is as follows. NDH-1 shuttles electrons from NADH, via FMN and iron-sulfur (Fe-S) centers, to quinones in the respiratory chain. Couples the redox reaction to proton translocation (for every two electrons transferred, four hydrogen ions are translocated across the cytoplasmic membrane), and thus conserves the redox energy in a proton gradient. This is NADH-quinone oxidoreductase subunit F (nuoF) from Rickettsia felis (strain ATCC VR-1525 / URRWXCal2) (Rickettsia azadi).